Consider the following 325-residue polypeptide: Foldase protein PrsA (325 aa).

A signal peptide spans 1 to 20; that stretch reads MKLMNKIIVPVTASALLLGA. The N-palmitoyl cysteine moiety is linked to residue Cys21. A lipid anchor (S-diacylglycerol cysteine) is attached at Cys21. Positions 139–245 constitute a PpiC domain; that stretch reads ENSKKTSHIL…YGYHIIKADK (107 aa). Disordered stretches follow at residues 159–200 and 303–325; these read EGLS…SAKK and PDKI…NSGS.

It belongs to the PrsA family.

The protein resides in the cell membrane. It carries out the reaction [protein]-peptidylproline (omega=180) = [protein]-peptidylproline (omega=0). Its function is as follows. Plays a major role in protein secretion by helping the post-translocational extracellular folding of several secreted proteins. The polypeptide is Foldase protein PrsA (Staphylococcus epidermidis (strain ATCC 35984 / DSM 28319 / BCRC 17069 / CCUG 31568 / BM 3577 / RP62A)).